The primary structure comprises 223 residues: Phosphoribosylformylglycinamidine synthase subunit PurQ (223 aa).

The Glutamine amidotransferase type-1 domain maps to 3–223 (SAVVQLPGLN…FASALDVVAA (221 aa)). The Nucleophile role is filled by Cys86. Active-site residues include His196 and Glu198.

In terms of assembly, part of the FGAM synthase complex composed of 1 PurL, 1 PurQ and 2 PurS subunits.

It is found in the cytoplasm. The enzyme catalyses N(2)-formyl-N(1)-(5-phospho-beta-D-ribosyl)glycinamide + L-glutamine + ATP + H2O = 2-formamido-N(1)-(5-O-phospho-beta-D-ribosyl)acetamidine + L-glutamate + ADP + phosphate + H(+). It catalyses the reaction L-glutamine + H2O = L-glutamate + NH4(+). It participates in purine metabolism; IMP biosynthesis via de novo pathway; 5-amino-1-(5-phospho-D-ribosyl)imidazole from N(2)-formyl-N(1)-(5-phospho-D-ribosyl)glycinamide: step 1/2. Its function is as follows. Part of the phosphoribosylformylglycinamidine synthase complex involved in the purines biosynthetic pathway. Catalyzes the ATP-dependent conversion of formylglycinamide ribonucleotide (FGAR) and glutamine to yield formylglycinamidine ribonucleotide (FGAM) and glutamate. The FGAM synthase complex is composed of three subunits. PurQ produces an ammonia molecule by converting glutamine to glutamate. PurL transfers the ammonia molecule to FGAR to form FGAM in an ATP-dependent manner. PurS interacts with PurQ and PurL and is thought to assist in the transfer of the ammonia molecule from PurQ to PurL. The polypeptide is Phosphoribosylformylglycinamidine synthase subunit PurQ (Rhizobium etli (strain ATCC 51251 / DSM 11541 / JCM 21823 / NBRC 15573 / CFN 42)).